A 247-amino-acid polypeptide reads, in one-letter code: Carboxy-S-adenosyl-L-methionine synthase (247 aa).

S-adenosyl-L-methionine-binding positions include Y39, 64 to 66 (GCS), 89 to 90 (DN), 117 to 118 (DI), N132, and R199.

It belongs to the class I-like SAM-binding methyltransferase superfamily. Cx-SAM synthase family. Homodimer.

The enzyme catalyses prephenate + S-adenosyl-L-methionine = carboxy-S-adenosyl-L-methionine + 3-phenylpyruvate + H2O. Functionally, catalyzes the conversion of S-adenosyl-L-methionine (SAM) to carboxy-S-adenosyl-L-methionine (Cx-SAM). This Salmonella agona (strain SL483) protein is Carboxy-S-adenosyl-L-methionine synthase.